A 21-amino-acid polypeptide reads, in one-letter code: Fibrinogen beta chain (21 aa).

Q1 is modified (pyrrolidone carboxylic acid). The span at 1 to 10 shows a compositional bias: acidic residues; the sequence is QFPTDYDEGQ. The tract at residues 1 to 21 is disordered; that stretch reads QFPTDYDEGQDDRPKLGLGAR. Residue T4 is glycosylated (O-linked (GalNAc...) threonine). Y6 carries the post-translational modification Sulfotyrosine.

Heterohexamer; disulfide linked. Contains 2 sets of 3 non-identical chains (alpha, beta and gamma). The 2 heterotrimers are in head to head conformation with the N-termini in a small central domain. In terms of processing, conversion of fibrinogen to fibrin is triggered by thrombin, which cleaves fibrinopeptides A and B from alpha and beta chains, and thus exposes the N-terminal polymerization sites responsible for the formation of the soft clot.

The protein resides in the secreted. Functionally, cleaved by the protease thrombin to yield monomers which, together with fibrinogen alpha (FGA) and fibrinogen gamma (FGG), polymerize to form an insoluble fibrin matrix. Fibrin has a major function in hemostasis as one of the primary components of blood clots. In addition, functions during the early stages of wound repair to stabilize the lesion and guide cell migration during re-epithelialization. Was originally thought to be essential for platelet aggregation, based on in vitro studies using anticoagulated blood. However subsequent studies have shown that it is not absolutely required for thrombus formation in vivo. Enhances expression of SELP in activated platelets. Maternal fibrinogen is essential for successful pregnancy. Fibrin deposition is also associated with infection, where it protects against IFNG-mediated hemorrhage. May also facilitate the antibacterial immune response via both innate and T-cell mediated pathways. The sequence is that of Fibrinogen beta chain (FGB) from Bubalus bubalis (Domestic water buffalo).